Consider the following 520-residue polypeptide: UvrABC system protein C (520 aa).

The GIY-YIG domain occupies 11–89 (EEPGCYQFKD…IKKYQPKYNI (79 aa)). Positions 195–230 (QDLIYDLRKEMETFAAAEEYEKALVIRDRIAAIENL) constitute a UVR domain.

This sequence belongs to the UvrC family. Interacts with UvrB in an incision complex.

The protein resides in the cytoplasm. Functionally, the UvrABC repair system catalyzes the recognition and processing of DNA lesions. UvrC both incises the 5' and 3' sides of the lesion. The N-terminal half is responsible for the 3' incision and the C-terminal half is responsible for the 5' incision. The sequence is that of UvrABC system protein C from Methanospirillum hungatei JF-1 (strain ATCC 27890 / DSM 864 / NBRC 100397 / JF-1).